The sequence spans 389 residues: Phenylpropanoylacetyl-CoA synthase (389 aa).

Cysteine 163 is a catalytic residue.

Belongs to the thiolase-like superfamily. Chalcone/stilbene synthases family. As to quaternary structure, homodimer. As to expression, expressed in both the leaf and rhizome, with higher expression in the rhizome.

The catalysed reaction is (E)-feruloyl-CoA + malonyl-CoA + H(+) = (E)-feruloylacetyl-CoA + CO2 + CoA. It carries out the reaction 4-coumaroyl-CoA + malonyl-CoA + H(+) = (4-coumaroyl)acetyl-CoA + CO2 + CoA. The protein operates within secondary metabolite biosynthesis; flavonoid biosynthesis. Functionally, catalyzes the formation of feruloyldiketide-CoA by condensing feruloyl-CoA and malonyl-CoA in the curcuminoid biosynthesis. Has no activity with cinnamoyl-CoA. This Curcuma longa (Turmeric) protein is Phenylpropanoylacetyl-CoA synthase (DCS).